The following is a 181-amino-acid chain: CD160 antigen (181 aa).

The N-terminal stretch at 1-24 is a signal peptide; sequence MLLEPGRGCCALAILLAIVDIQSG. Residues 25–133 enclose the Ig-like V-type domain; that stretch reads GCINITSSAS…QGHFFSILFT (109 aa). N-linked (GlcNAc...) asparagine glycosylation occurs at N28. Disulfide bonds link C44/C112 and C61/C68. Residue N137 is glycosylated (N-linked (GlcNAc...) asparagine). S159 carries GPI-anchor amidated serine lipidation. The propeptide at 160-181 is removed in mature form; that stretch reads SGFLQEKVWVMLVTSLVALQAL.

In terms of assembly, homomultimer; disulfide-linked. Interacts with HLA-G. Interacts with HLA-A2-B2M in complex with an HIV-derived peptide. Interacts with TNFRSF14 (via cysteine-rich domain 1); this interaction is direct. Interacts with LCK and CD247/CD3 zeta chain. Expression is restricted to functional NK and cytotoxic T lymphocytes. Expressed in viral-specific effector memory and terminally differentiated effector memory CD8+ T cells. Expressed in memory and activated CD4+ T cell subsets (at protein level). Expressed at high levels in intraepithelial lymphocytes (at protein level). Expressed in both alpha-beta and gamma-delta CD8+ T cell subsets (at protein level). Expressed in umbilical vein endothelial cells (at protein level). Expressed in monocytes and at lower levels in B cells. Isoform 3: Expressed exclusively in activated NK cells (at protein level).

It is found in the cell membrane. The protein resides in the secreted. Receptor on immune cells capable to deliver stimulatory or inhibitory signals that regulate cell activation and differentiation. Exists as a GPI-anchored and as a transmembrane form, each likely initiating distinct signaling pathways via phosphoinositol 3-kinase in activated NK cells and via LCK and CD247/CD3 zeta chain in activated T cells. Receptor for both classical and non-classical MHC class I molecules. In the context of acute viral infection, recognizes HLA-C and triggers NK cell cytotoxic activity, likely playing a role in anti-viral innate immune response. On CD8+ T cells, binds HLA-A2-B2M in complex with a viral peptide and provides a costimulatory signal to activated/memory T cells. Upon persistent antigen stimulation, such as occurs during chronic viral infection, may progressively inhibit TCR signaling in memory CD8+ T cells, contributing to T cell exhaustion. On endothelial cells, recognizes HLA-G and controls angiogenesis in immune privileged sites. Receptor or ligand for TNF superfamily member TNFRSF14, participating in bidirectional cell-cell contact signaling between antigen presenting cells and lymphocytes. Upon ligation of TNFRSF14, provides stimulatory signal to NK cells enhancing IFNG production and anti-tumor immune response. On activated CD4+ T cells, interacts with TNFRSF14 and down-regulates CD28 costimulatory signaling, restricting memory and alloantigen-specific immune response. In the context of bacterial infection, acts as a ligand for TNFRSF14 on epithelial cells, triggering the production of antimicrobial proteins and pro-inflammatory cytokines. In terms of biological role, the soluble GPI-cleaved form, usually released by activated lymphocytes, might play an immune regulatory role by limiting lymphocyte effector functions. This is CD160 antigen from Homo sapiens (Human).